Here is a 201-residue protein sequence, read N- to C-terminus: Large ribosomal subunit protein uL4 (201 aa).

Residues 42-67 are disordered; the sequence is GNSAQKTRSEVSGGGKKPWNQKGTGR.

The protein belongs to the universal ribosomal protein uL4 family. In terms of assembly, part of the 50S ribosomal subunit.

In terms of biological role, one of the primary rRNA binding proteins, this protein initially binds near the 5'-end of the 23S rRNA. It is important during the early stages of 50S assembly. It makes multiple contacts with different domains of the 23S rRNA in the assembled 50S subunit and ribosome. Functionally, forms part of the polypeptide exit tunnel. The polypeptide is Large ribosomal subunit protein uL4 (Legionella pneumophila (strain Corby)).